Here is a 383-residue protein sequence, read N- to C-terminus: Putative [LysW]-aminoadipate semialdehyde/glutamate semialdehyde transaminase (383 aa).

Pyridoxal 5'-phosphate is bound by residues 97–98 (GT) and Phe124. Residue Arg127 participates in substrate binding. 209-212 (DEVQ) contacts pyridoxal 5'-phosphate. An N6-(pyridoxal phosphate)lysine modification is found at Lys238. Position 266 (Ser266) interacts with substrate. Residue Thr267 coordinates pyridoxal 5'-phosphate.

The protein belongs to the class-III pyridoxal-phosphate-dependent aminotransferase family. LysJ subfamily. In terms of assembly, homodimer. Pyridoxal 5'-phosphate serves as cofactor.

It localises to the cytoplasm. The catalysed reaction is [amino-group carrier protein]-C-terminal-gamma-(L-lysyl)-L-glutamate + 2-oxoglutarate = [amino-group carrier protein]-C-terminal-N-(1-carboxy-5-oxopentan-1-yl)-L-glutamine + L-glutamate. The enzyme catalyses [amino-group carrier protein]-C-terminal-gamma-(L-ornithyl)-L-glutamate + 2-oxoglutarate = [amino-group carrier protein]-C-terminal-gamma-(L-glutamyl-5-semialdehyde)-L-glutamate + L-glutamate. It functions in the pathway amino-acid biosynthesis; L-lysine biosynthesis via AAA pathway; L-lysine from L-alpha-aminoadipate (Thermus route): step 4/5. The protein operates within amino-acid biosynthesis; L-arginine biosynthesis. Functionally, involved in both the arginine and lysine biosynthetic pathways. This chain is Putative [LysW]-aminoadipate semialdehyde/glutamate semialdehyde transaminase, found in Pyrobaculum aerophilum (strain ATCC 51768 / DSM 7523 / JCM 9630 / CIP 104966 / NBRC 100827 / IM2).